The sequence spans 257 residues: Type 2 phosphatidylinositol 4,5-bisphosphate 4-phosphatase (257 aa).

Basic and acidic residues predominate over residues 1 to 10 (MAADGVDERS). Residues 1 to 34 (MAADGVDERSPLLSASHSGSVTPTAPPYLQDSSP) form a disordered region. Residues 13 to 23 (LSASHSGSVTP) show a composition bias toward polar residues. A Phosphothreonine modification is found at T22. S33 carries the phosphoserine modification. C107 is a catalytic residue. The short motif at 107–113 (CKDTSRR) is the CX5R motif element. The next 2 membrane-spanning stretches (helical) occupy residues 192 to 212 (CCAY…LTVG) and 227 to 247 (WAIA…WGAI).

The protein localises to the late endosome membrane. It is found in the lysosome membrane. Its subcellular location is the cytoplasmic vesicle. It localises to the phagosome membrane. The protein resides in the cell membrane. The catalysed reaction is a 1,2-diacyl-sn-glycero-3-phospho-(1D-myo-inositol-4,5-bisphosphate) + H2O = a 1,2-diacyl-sn-glycero-3-phospho-(1D-myo-inositol-5-phosphate) + phosphate. Catalyzes the hydrolysis of phosphatidylinositol-4,5-bisphosphate (PtdIns-4,5-P2) to phosphatidylinositol-4-phosphate (PtdIns-4-P). Does not hydrolyze phosphatidylinositol 3,4,5-trisphosphate, phosphatidylinositol 3,4-bisphosphate, inositol 3,5-bisphosphate, inositol 3,4-bisphosphate, phosphatidylinositol 5-monophosphate, phosphatidylinositol 4-monophosphate and phosphatidylinositol 3-monophosphate. Negatively regulates the phagocytosis of large particles by reducing phagosomal phosphatidylinositol 4,5-bisphosphate accumulation during cup formation. This Bos taurus (Bovine) protein is Type 2 phosphatidylinositol 4,5-bisphosphate 4-phosphatase.